Here is a 282-residue protein sequence, read N- to C-terminus: MSDNIISFDHVTFTYPDSPRPALSDLSFAIERGSWTALIGHNGSGKSTVSKLINGLLAPDDLDKSSITVDGVKLGADTVWEVREKVGIVFQNPDNQFVGATVSDDVAFGLENRAVPRPEMLKIVAQAVADVGMADYADSEPSNLSGGQKQRVAIAGILAVKPQVIILDESTSMLDPEGKEQILDLVRKIKEDNNLTVISITHDLEEAAGADQVLVLDDGQLLDQGKPEEIFPKVEMLKRIGLDIPFVYRLKQLLKERGIVLPDEIDDDEKLVQSLWQLNSKM.

The region spanning 6–243 (ISFDHVTFTY…VEMLKRIGLD (238 aa)) is the ABC transporter domain. 40–47 (GHNGSGKS) serves as a coordination point for ATP.

This sequence belongs to the ABC transporter superfamily. Energy-coupling factor EcfA family. As to quaternary structure, forms a stable energy-coupling factor (ECF) transporter complex composed of 2 membrane-embedded substrate-binding proteins (S component), 2 ATP-binding proteins (A component) and 2 transmembrane proteins (T component).

The protein resides in the cell membrane. ATP-binding (A) component of a common energy-coupling factor (ECF) ABC-transporter complex. Unlike classic ABC transporters this ECF transporter provides the energy necessary to transport a number of different substrates. The protein is Energy-coupling factor transporter ATP-binding protein EcfA1 of Lactobacillus delbrueckii subsp. bulgaricus (strain ATCC 11842 / DSM 20081 / BCRC 10696 / JCM 1002 / NBRC 13953 / NCIMB 11778 / NCTC 12712 / WDCM 00102 / Lb 14).